Reading from the N-terminus, the 100-residue chain is Small ribosomal subunit protein uS14c (100 aa).

Belongs to the universal ribosomal protein uS14 family. Part of the 30S ribosomal subunit.

It is found in the plastid. It localises to the chloroplast. In terms of biological role, binds 16S rRNA, required for the assembly of 30S particles. The protein is Small ribosomal subunit protein uS14c of Adiantum capillus-veneris (Maidenhair fern).